The chain runs to 643 residues: Phosphatidylinositol-3,5-bisphosphate 3-phosphatase MTMR2 (643 aa).

Polar residues-rich tracts occupy residues methionine 1–serine 12 and aspartate 23–lysine 40. The segment at methionine 1–alanine 54 is disordered. 2 positions are modified to phosphoserine: serine 6 and serine 9. Residues serine 41–alanine 54 are compositionally biased toward low complexity. The residue at position 58 (serine 58) is a Phosphoserine. One can recognise a GRAM domain in the interval asparagine 68–glycine 139. The Myotubularin phosphatase domain maps to glycine 205–tyrosine 580. Residues asparagine 330, asparagine 355, and isoleucine 356 each contribute to the a 1,2-diacyl-sn-glycero-3-phospho-(1D-myo-inositol-3,5-bisphosphate) site. 3 residues coordinate a 1,2-diacyl-sn-glycero-3-phospho-(1D-myo-inositol-3-phosphate): asparagine 330, asparagine 355, and isoleucine 356. Cysteine 417 acts as the Phosphocysteine intermediate in catalysis. Residues serine 418, aspartate 419, glycine 420, tryptophan 421, aspartate 422, arginine 423, arginine 459, and arginine 463 each coordinate a 1,2-diacyl-sn-glycero-3-phospho-(1D-myo-inositol-3,5-bisphosphate). Serine 418, aspartate 419, glycine 420, tryptophan 421, aspartate 422, and arginine 423 together coordinate a 1,2-diacyl-sn-glycero-3-phospho-(1D-myo-inositol-3-phosphate). Arginine 463 contacts a 1,2-diacyl-sn-glycero-3-phospho-(1D-myo-inositol-3-phosphate). The stretch at isoleucine 593 to glutamate 627 forms a coiled coil. The disordered stretch occupies residues leucine 614–valine 643.

This sequence belongs to the protein-tyrosine phosphatase family. Non-receptor class myotubularin subfamily. Homodimer (via coiled-coil domain). Heterotetramer consisting of one MTMR2 dimer and one SBF2/MTMR13 dimer; specifically in peripheral nerves stabilizes SBF2/MTMR13 at the membranes and increases MTMR2 catalytic activity towards phosphatidylinositol 3,5-bisphosphate and to a lesser extent towards phosphatidylinositol 3-phosphate. Heterodimer with SBF1/MTMR5; acts as an adapter for the phosphatase MTMR2 to regulate MTMR2 catalytic activity and subcellular location. Heterodimer with MTMR12. In terms of processing, phosphorylation at Ser-58 decreases MTMR2 localization to endocytic vesicular structures.

Its subcellular location is the cytoplasm. It is found in the early endosome membrane. The protein localises to the perinuclear region. The protein resides in the cell projection. It localises to the axon. Its subcellular location is the endosome membrane. It carries out the reaction a 1,2-diacyl-sn-glycero-3-phospho-(1D-myo-inositol-3,5-bisphosphate) + H2O = a 1,2-diacyl-sn-glycero-3-phospho-(1D-myo-inositol-5-phosphate) + phosphate. It catalyses the reaction a 1,2-diacyl-sn-glycero-3-phospho-(1D-myo-inositol-3-phosphate) + H2O = a 1,2-diacyl-sn-glycero-3-phospho-(1D-myo-inositol) + phosphate. The catalysed reaction is 1,2-dioctanoyl-sn-glycero-3-phospho-(1-D-myo-inositol-3-phosphate) + H2O = 1,2-dioctanoyl-sn-glycero-3-phospho-(1D-myo-inositol) + phosphate. The enzyme catalyses 1,2-dioctanoyl-sn-glycero-3-phospho-(1D-myo-inositol-3,5-bisphosphate) + H2O = 1,2-dioctanoyl-sn-glycero-3-phospho-(1D-myo-inositol-5-phosphate) + phosphate. In terms of biological role, lipid phosphatase that specifically dephosphorylates the D-3 position of phosphatidylinositol 3-phosphate and phosphatidylinositol 3,5-bisphosphate, generating phosphatidylinositol and phosphatidylinositol 5-phosphate. Regulates the level of these phosphoinositides critical for various biological processes including autophagy initiation and autophagosome maturation. The polypeptide is Phosphatidylinositol-3,5-bisphosphate 3-phosphatase MTMR2 (Bos taurus (Bovine)).